A 324-amino-acid polypeptide reads, in one-letter code: Pancreas transcription factor 1 subunit alpha (324 aa).

The bHLH domain occupies Q160–L212. A disordered region spans residues D302–S324.

In terms of assembly, component of the pancreas transcription factor 1 complex (PTF1) which is composed of TCF3/p75, TCF12/p64 and PTF1A/p48. TCF3 is responsible for the nuclear import of the p48/p64 complex. Interacts with TCF3 and RBPSUH/RBP-Jkappa. Expressed in precursors of pancreatic islets, acini and ducts.

It is found in the nucleus. The protein resides in the cytoplasm. In terms of biological role, transcription factor implicated in the cell fate determination in various organs. Binds to the E-box consensus sequence 5'-CANNTG-3'. Plays a role in early and late pancreas development and differentiation. Important for determining whether cells allocated to the pancreatic buds continue towards pancreatic organogenesis or revert back to duodenal fates. May be involved in the maintenance of exocrine pancreas-specific gene expression including ELA1 and amylase. Required for the formation of pancreatic acinar and ductal cells. Plays an important role in cerebellar development. Directly regulated by FOXN4 and RORC during retinal development, FOXN4-PTF1A pathway plays a central role in directing the differentiation of retinal progenitors towards horizontal and amacrine fates. This chain is Pancreas transcription factor 1 subunit alpha (Ptf1a), found in Mus musculus (Mouse).